We begin with the raw amino-acid sequence, 156 residues long: 6,7-dimethyl-8-ribityllumazine synthase (156 aa).

Residues phenylalanine 23, 57–59, and 81–83 contribute to the 5-amino-6-(D-ribitylamino)uracil site; these read AYE and AII. 86–87 contacts (2S)-2-hydroxy-3-oxobutyl phosphate; sequence GT. Histidine 89 functions as the Proton donor in the catalytic mechanism. Phenylalanine 114 lines the 5-amino-6-(D-ribitylamino)uracil pocket. Arginine 128 contributes to the (2S)-2-hydroxy-3-oxobutyl phosphate binding site.

It belongs to the DMRL synthase family.

It catalyses the reaction (2S)-2-hydroxy-3-oxobutyl phosphate + 5-amino-6-(D-ribitylamino)uracil = 6,7-dimethyl-8-(1-D-ribityl)lumazine + phosphate + 2 H2O + H(+). It participates in cofactor biosynthesis; riboflavin biosynthesis; riboflavin from 2-hydroxy-3-oxobutyl phosphate and 5-amino-6-(D-ribitylamino)uracil: step 1/2. In terms of biological role, catalyzes the formation of 6,7-dimethyl-8-ribityllumazine by condensation of 5-amino-6-(D-ribitylamino)uracil with 3,4-dihydroxy-2-butanone 4-phosphate. This is the penultimate step in the biosynthesis of riboflavin. The chain is 6,7-dimethyl-8-ribityllumazine synthase from Helicobacter acinonychis (strain Sheeba).